Here is a 1256-residue protein sequence, read N- to C-terminus: Probable splicing factor 3B subunit 3 (1256 aa).

The interval 671–696 is disordered; sequence TKKSQSQTGQTTTTTTSTSSASSSVT. The segment covering 674–696 has biased composition (low complexity); that stretch reads SQSQTGQTTTTTTSTSSASSSVT.

It belongs to the RSE1 family. Identified in the spliceosome A complex; remains associated with the spliceosome throughout the splicing process. Component of the spliceosome B complex. Identified in the spliceosome C complex. Identified in the spliceosome E complex. Component of the U11/U12 snRNPs that are part of the U12-type spliceosome. Component of splicing factor SF3B complex which is composed of at least eight subunits. SF3B associates with the splicing factor SF3A and a 12S RNA unit to form the U2 small nuclear ribonucleoproteins complex (U2 snRNP).

Its subcellular location is the nucleus. Functionally, involved in pre-mRNA splicing as a component of the splicing factor SF3B complex, a constituent of the spliceosome. SF3B complex is required for 'A' complex assembly formed by the stable binding of U2 snRNP to the branchpoint sequence (BPS) in pre-mRNA. Sequence independent binding of SF3A/SF3B complex upstream of the branch site is essential, it may anchor U2 snRNP to the pre-mRNA. May also be involved in the assembly of the 'E' complex. Also belongs to the minor U12-dependent spliceosome, which is involved in the splicing of rare class of nuclear pre-mRNA intron. This is Probable splicing factor 3B subunit 3 (sf3b3) from Dictyostelium discoideum (Social amoeba).